Here is a 283-residue protein sequence, read N- to C-terminus: Bifunctional protein FolD (283 aa).

Residues 163–165 (GRS), Ser-188, and Ile-229 each bind NADP(+).

Belongs to the tetrahydrofolate dehydrogenase/cyclohydrolase family. In terms of assembly, homodimer.

The enzyme catalyses (6R)-5,10-methylene-5,6,7,8-tetrahydrofolate + NADP(+) = (6R)-5,10-methenyltetrahydrofolate + NADPH. It catalyses the reaction (6R)-5,10-methenyltetrahydrofolate + H2O = (6R)-10-formyltetrahydrofolate + H(+). It participates in one-carbon metabolism; tetrahydrofolate interconversion. Functionally, catalyzes the oxidation of 5,10-methylenetetrahydrofolate to 5,10-methenyltetrahydrofolate and then the hydrolysis of 5,10-methenyltetrahydrofolate to 10-formyltetrahydrofolate. The sequence is that of Bifunctional protein FolD from Campylobacter concisus (strain 13826).